Reading from the N-terminus, the 323-residue chain is o-succinylbenzoate synthase (323 aa).

The Proton donor role is filled by Lys-134. Mg(2+) is bound by residues Asp-162, Glu-191, and Asp-214. Lys-236 serves as the catalytic Proton acceptor.

This sequence belongs to the mandelate racemase/muconate lactonizing enzyme family. MenC type 1 subfamily. It depends on a divalent metal cation as a cofactor.

The catalysed reaction is (1R,6R)-6-hydroxy-2-succinyl-cyclohexa-2,4-diene-1-carboxylate = 2-succinylbenzoate + H2O. The protein operates within quinol/quinone metabolism; 1,4-dihydroxy-2-naphthoate biosynthesis; 1,4-dihydroxy-2-naphthoate from chorismate: step 4/7. Its pathway is quinol/quinone metabolism; menaquinone biosynthesis. Its function is as follows. Converts 2-succinyl-6-hydroxy-2,4-cyclohexadiene-1-carboxylate (SHCHC) to 2-succinylbenzoate (OSB). The protein is o-succinylbenzoate synthase of Photorhabdus laumondii subsp. laumondii (strain DSM 15139 / CIP 105565 / TT01) (Photorhabdus luminescens subsp. laumondii).